Reading from the N-terminus, the 924-residue chain is Cell division control protein 13 (924 aa).

The disordered stretch occupies residues 265–336 (PTTDISNMGE…KRKRKLSFHS (72 aa)). Residues 295–308 (GKYFSSKSYIQSQT) show a composition bias toward polar residues. Position 306 is a phosphoserine (Ser-306). Position 308 is a phosphothreonine (Thr-308). Basic and acidic residues predominate over residues 309–326 (PERKTSVPNNWHDDDSGS). The residue at position 333 (Ser-333) is a Phosphoserine. The OB DNA-binding region spans 500–686 (KMARKDPTIE…FEEYRRFFPI (187 aa)).

In terms of assembly, interacts with POL1, EST1, FUN12, STM1, STN1 and TEN1.

Its subcellular location is the chromosome. The protein resides in the telomere. Functionally, single-stranded telomeric DNA-binding protein that regulates telomere replication. Has a role in both positive and negative regulation. Promotes [TG(1-3)] strand lengthening via interaction with EST1. Promotes [C(1-3)A] strand re-synthesis by DNA polymerase alpha via interaction with POL1. Negatively regulates telomere elongation of the G strand via binding with STN1 thereby inhibiting telomerase activity. This chain is Cell division control protein 13 (CDC13), found in Saccharomyces cerevisiae (strain ATCC 204508 / S288c) (Baker's yeast).